The primary structure comprises 144 residues: Translation initiation factor 5A (144 aa).

The residue at position 38 (Lys38) is a Hypusine.

This sequence belongs to the eIF-5A family.

It is found in the cytoplasm. Its function is as follows. Functions by promoting the formation of the first peptide bond. The chain is Translation initiation factor 5A from Nanoarchaeum equitans (strain Kin4-M).